We begin with the raw amino-acid sequence, 397 residues long: MKELLLLYSGGLDTSVMIKWMNENLGYDVSTLTLDIGNNDLKSIREKAEAIGAVETFVEDVKQEFSYEYISKSILANGSYEGYPLSTALARPLMAKKAVELAEKHGFEAIAHGSTGRGNDQVRFELGIKALNPSLEMLAPVRDWNMLRSEEIEYAKKNNIIVPSDGKYSVDENLWGRSIEGSEIENMSLPVPEDAYEWLVPPWEAGPGEVIKLEFSNGLPVAINDSDFELQNLIANLNIIGGRNSIGLIDHVEDRITGIKSREVYECPAAEIITYAHGYLESLILNKHEISIKSFLDSKFSQFVYNGLWYDPAMKPLIAGEEILNSEINGSISLKLYKGKIYFNGSKGANFSYNSNVANYSTYEFDQKSSKGFIDIFKNDTVYSILARQKAKEEALS.

7–15 (LYSGGLDTS) provides a ligand contact to ATP. Position 83 (Tyr-83) interacts with L-citrulline. Position 113 (Gly-113) interacts with ATP. Positions 115, 119, and 120 each coordinate L-aspartate. Asn-119 serves as a coordination point for L-citrulline. The L-citrulline site is built by Arg-123, Ser-169, Ser-178, Glu-253, and Tyr-265.

The protein belongs to the argininosuccinate synthase family. Type 1 subfamily. In terms of assembly, homotetramer.

The protein resides in the cytoplasm. The catalysed reaction is L-citrulline + L-aspartate + ATP = 2-(N(omega)-L-arginino)succinate + AMP + diphosphate + H(+). It participates in amino-acid biosynthesis; L-arginine biosynthesis; L-arginine from L-ornithine and carbamoyl phosphate: step 2/3. The chain is Argininosuccinate synthase from Thermoplasma volcanium (strain ATCC 51530 / DSM 4299 / JCM 9571 / NBRC 15438 / GSS1).